A 189-amino-acid chain; its full sequence is MTEVLPKNIEYCEVCTFPPEYCEFGLSFKRCKEWLQENQPELFEKLYSADALANATSTLSLEKEQKISQEMEKKQAKEEAKLERELQKKLSSKVTIKRIERNKRKHVISISGLEVFNIDMKKLAKTFASKFATGASVTKNAEKKDEIIVQGDVSDEAKDYIEKLLQEKALDEVKVEQIDEKKKKKPPAP.

The SUI1 domain maps to 94–165 (VTIKRIERNK…EAKDYIEKLL (72 aa)).

This sequence belongs to the DENR family. Interacts with the 40S ribosomal subunit.

The protein localises to the cytoplasm. In Debaryomyces hansenii (strain ATCC 36239 / CBS 767 / BCRC 21394 / JCM 1990 / NBRC 0083 / IGC 2968) (Yeast), this protein is Translation machinery-associated protein 22 (TMA22).